We begin with the raw amino-acid sequence, 715 residues long: MSLELEWMPIEDLKLPSNVIEIIKKRGIKKLNPPQTEAVKKGLLEGNRLLLTSPTGSGKTLIAEMGIISFLLKNGGKAIYVTPLRALTNEKYLTFKDWELIGFKVAMTSGDYDTDDAWLKNYDIIITTYEKLDSLWRHRPEWLNEVNYFVLDELHYLNDPERGPVVESVTIRAKRRNLLALSATISNYKQIAKWLGAEPVATNWRPVPLIEGVIYPERKKKEYNVIFKDNTTKKVHGDDAIIAYTLDSLSKNGQVLVFRNSRKMAESTALKIANYMNFVSLDENALSEILKQLDDIEEGGSDEKELLKSLISKGVAYHHAGLSKALRDLIEEGFRQRKIKVIVATPTLAAGVNLPARTVIIGDIYRFNKKIAGYYDEIPIMEYKQMSGRAGRPGFDQIGESIVVVRDKEDVDRVFKKYVLSDVEPIESKLGSERAFYTFLLGILSAEGNLSEKQLENFAYESLLAKQLVDVYFDRAIRWLLEHSFIKEEGNTFALTNFGKRVADLYINPFTADIIRKGLEGHKASCELAYLHLLAFTPDGPLVSVGRNEEEELIELLEDLDCELLIEEPYEEDEYSLYINALKVALIMKDWMDEVDEDTILSKYNIGSGDLRNMVETMDWLTYSAYHLSRELKLNEHADKLRILNLRVRDGIKEELLELVQISGVGRKRARLLYNNGIKELGDVVMNPDKVKNLLGQKLGEKVVQEAARLLNRFH.

A Q motif motif is present at residues 8 to 36 (MPIEDLKLPSNVIEIIKKRGIKKLNPPQT). ATP-binding positions include glutamine 35 and 53 to 60 (SPTGSGKT). A Helicase ATP-binding domain is found at 40-203 (KKGLLEGNRL…WLGAEPVATN (164 aa)). Residues 152–155 (DELH) carry the DEAH box motif. Residues 236-442 (HGDDAIIAYT…ERAFYTFLLG (207 aa)) enclose the Helicase C-terminal domain.

Belongs to the helicase family. Hel308 subfamily. In terms of assembly, monomer.

The enzyme catalyses Couples ATP hydrolysis with the unwinding of duplex DNA by translocating in the 3'-5' direction.. It carries out the reaction ATP + H2O = ADP + phosphate + H(+). Its function is as follows. DNA-dependent ATPase and 3'-5' DNA helicase that may be involved in repair of stalled replication forks. A low processivity 3'-5' helicase. Unwinds short dsDNA substrates with 3'-overhangs (25 bp dsDNA with 25 base overhang), less active on longer dsDNA substrates. Also unwinds the lagging strand of a stalled replication fork (but the leading strand was not tested). Binds ssDNA, but dsDNA about 35-fold less well. Able to displace streptavidin from biotinylated ssDNA, which is partially inhibited by DNA-binding proteins, suggesting it may play a role in stripping proteins from stalled replication forks. This Saccharolobus solfataricus (strain 98/2) (Sulfolobus solfataricus) protein is ATP-dependent DNA helicase Hel308.